A 171-amino-acid polypeptide reads, in one-letter code: Adenine phosphoribosyltransferase (171 aa).

This sequence belongs to the purine/pyrimidine phosphoribosyltransferase family. Homodimer.

It localises to the cytoplasm. It carries out the reaction AMP + diphosphate = 5-phospho-alpha-D-ribose 1-diphosphate + adenine. It functions in the pathway purine metabolism; AMP biosynthesis via salvage pathway; AMP from adenine: step 1/1. Functionally, catalyzes a salvage reaction resulting in the formation of AMP, that is energically less costly than de novo synthesis. The sequence is that of Adenine phosphoribosyltransferase from Synechococcus sp. (strain ATCC 27144 / PCC 6301 / SAUG 1402/1) (Anacystis nidulans).